Reading from the N-terminus, the 981-residue chain is Ubiquitin carboxyl-terminal hydrolase 37 (981 aa).

The KEN box 1 signature appears at 32-34 (KEN). Short sequence motifs (D-box) lie at residues 71 to 79 (RLMLTLQDN) and 96 to 105 (RLFLDAVHQN). The interval 111-306 (MKPSQGSGSF…TPSAKRSLGF (196 aa)) is disordered. Serine 114 carries the post-translational modification Phosphoserine. The span at 135–148 (RQLSYSDNQVSSKR) shows a compositional bias: polar residues. Residues 149–159 (GSLETKDDTPF) show a composition bias toward basic and acidic residues. A D-box 3 motif is present at residues 160 to 168 (RKVLGNPSR). The residue at position 170 (serine 170) is a Phosphoserine. Low complexity predominate over residues 183 to 200 (RTIPSLTSTSTPLRSGLL). Serine 212 is modified (phosphoserine). Residues 223-225 (KEN) carry the KEN box 2 motif. Residues 245–259 (SREKQLSLKQSEENR) are compositionally biased toward basic and acidic residues. A compositionally biased stretch (polar residues) spans 283–300 (PGSTNLDRTNISSQTPSA). The USP domain maps to 343–953 (QGFSNLGNTC…SGYIFFYMHK (611 aa)). The active-site Nucleophile is cysteine 352. Serine 630 carries the phosphoserine; by CDK2 modification. Residues serine 652 and serine 654 each carry the phosphoserine modification. 2 disordered regions span residues 670-705 (EMSG…FDGM) and 721-797 (EASP…GEVD). Basic and acidic residues-rich tracts occupy residues 683-697 (KDSK…KSEL) and 721-734 (EASP…DDKP). A UIM 1 domain is found at 706–725 (SEEELLAAVLEISKREASPS). Serine 772 carries the post-translational modification Phosphoserine. Positions 776 to 788 (ITKDCDENKENKT) are enriched in basic and acidic residues. The KEN box 3 motif lies at 784 to 786 (KEN). 2 UIM domains span residues 808–827 (REEQ…QEAW) and 830–849 (KEDD…FNNS). The active-site Proton acceptor is histidine 908.

It belongs to the peptidase C19 family. As to quaternary structure, interacts with FZR1/CDH1. Interacts with CDT1. In terms of processing, polyubiquitinated via 'Lys-11'-linked ubiquitin by the APC(CDH1) complex during late mitosis, leading to its degradation. Able to mediate auto-deubiquitination. Phosphorylated at Ser-630 by CDK2 during G1/S phase but not during mitosis; phosphorylation at Ser-630 is required for deubiquitinase activity. Also polyubiquitinated during early G1 phase, without leading to degradation. Phosphorylated at Ser-114 by ATM following DNA damage, which in turn increases its deubiquitination activity towards BLM.

The protein resides in the nucleus. It is found in the chromosome. The enzyme catalyses Thiol-dependent hydrolysis of ester, thioester, amide, peptide and isopeptide bonds formed by the C-terminal Gly of ubiquitin (a 76-residue protein attached to proteins as an intracellular targeting signal).. In terms of biological role, deubiquitinase that plays a role in different processes including cell cycle regulation, DNA replication or DNA damage response. Antagonizes the anaphase-promoting complex (APC/C) during G1/S transition by mediating deubiquitination of cyclin-A (CCNA1 and CCNA2), thereby promoting S phase entry. Specifically mediates deubiquitination of 'Lys-11'-linked polyubiquitin chains, a specific ubiquitin-linkage type mediated by the APC/C complex. Phosphorylation at Ser-628 during G1/S phase maximizes the deubiquitinase activity, leading to prevent degradation of cyclin-A (CCNA1 and CCNA2). Plays an important role in the regulation of DNA replication by stabilizing the licensing factor CDT1. Also plays an essential role beyond S-phase entry to promote the efficiency and fidelity of replication by deubiquitinating checkpoint kinase 1/CHK1, promoting its stability. Sustains the DNA damage response (DDR) by deubiquitinating and stabilizing the ATP-dependent DNA helicase BLM. Mechanistically, DNA double-strand breaks (DSB) promotes ATM-mediated phosphorylation of USP37 and enhances the binding between USP37 and BLM. Promotes cell migration by deubiquitinating and stabilizing the epithelial-mesenchymal transition (EMT)-inducing transcription factor SNAI. Plays a role in the regulation of mitotic spindle assembly and mitotic progression by associating with chromatin-associated WAPL and stabilizing it through deubiquitination. In Bos taurus (Bovine), this protein is Ubiquitin carboxyl-terminal hydrolase 37 (USP37).